The sequence spans 102 residues: Glutaredoxin 1 (102 aa).

The 96-residue stretch at 1–96 (MNKAILHTII…KLLEGQPKKK (96 aa)) folds into the Glutaredoxin domain. C17 and C20 are joined by a disulfide.

The protein belongs to the glutaredoxin family. In terms of assembly, monomer.

Its subcellular location is the cytoplasm. Functionally, has a glutathione-disulfide oxidoreductase activity in the presence of NADPH and glutathione reductase. Reduces low molecular weight disulfides and proteins. The sequence is that of Glutaredoxin 1 (grxC1) from Rickettsia felis (strain ATCC VR-1525 / URRWXCal2) (Rickettsia azadi).